Consider the following 101-residue polypeptide: Small ribosomal subunit protein uS14 (101 aa).

A disordered region spans residues 53–72; that stretch reads RDAAAVRVRNRDSHDGRPRG. Positions 61-70 are enriched in basic and acidic residues; sequence RNRDSHDGRP.

The protein belongs to the universal ribosomal protein uS14 family. Part of the 30S ribosomal subunit. Contacts proteins S3 and S10.

In terms of biological role, binds 16S rRNA, required for the assembly of 30S particles and may also be responsible for determining the conformation of the 16S rRNA at the A site. The sequence is that of Small ribosomal subunit protein uS14 from Corynebacterium glutamicum (strain R).